A 246-amino-acid polypeptide reads, in one-letter code: MFPDIRFIVGIIGSVACMLLYSAPILTFKRVIKKASVEEFSCIPYILALFSCLTYSWYGFPVVSYGWENMTVCSISSLGVLFEGTFISIYVWFAPRGKKKQVMLMASLILAVFCMTVFFSSFSIHNHHIRKVFVGSVGLVSSISMYGSPLVAMKQVIRTKSVEFMPFYLSLFTLFTSLTWMAYGVIGRDPFIATPNCIGSIMGILQLVVYCIYSKCKEAPKVLHDIEQANVVKIPTSHVDTKGHNP.

Residues 1–6 lie on the Extracellular side of the membrane; that stretch reads MFPDIR. Residues 7 to 27 traverse the membrane as a helical segment; sequence FIVGIIGSVACMLLYSAPILT. Positions 7 to 96 constitute a MtN3/slv 1 domain; it reads FIVGIIGSVA…ISIYVWFAPR (90 aa). At 28-42 the chain is on the cytoplasmic side; that stretch reads FKRVIKKASVEEFSC. A helical membrane pass occupies residues 43 to 63; the sequence is IPYILALFSCLTYSWYGFPVV. The Extracellular portion of the chain corresponds to 64–74; that stretch reads SYGWENMTVCS. Residue Asn69 is glycosylated (N-linked (GlcNAc...) asparagine). Residues 75–95 form a helical membrane-spanning segment; it reads ISSLGVLFEGTFISIYVWFAP. Residues 96-101 lie on the Cytoplasmic side of the membrane; the sequence is RGKKKQ. Residues 102-122 traverse the membrane as a helical segment; the sequence is VMLMASLILAVFCMTVFFSSF. Over 123–131 the chain is Extracellular; it reads SIHNHHIRK. The helical transmembrane segment at 132–152 threads the bilayer; that stretch reads VFVGSVGLVSSISMYGSPLVA. Residues 133-217 enclose the MtN3/slv 2 domain; it reads FVGSVGLVSS…VVYCIYSKCK (85 aa). Residues 153–166 are Cytoplasmic-facing; that stretch reads MKQVIRTKSVEFMP. A helical membrane pass occupies residues 167–187; sequence FYLSLFTLFTSLTWMAYGVIG. Topologically, residues 188-191 are extracellular; the sequence is RDPF. The chain crosses the membrane as a helical span at residues 192-212; that stretch reads IATPNCIGSIMGILQLVVYCI. Over 213 to 246 the chain is Cytoplasmic; that stretch reads YSKCKEAPKVLHDIEQANVVKIPTSHVDTKGHNP.

It belongs to the SWEET sugar transporter family. As to quaternary structure, forms homooligomers and/or heterooligomers.

The protein resides in the cell membrane. Functionally, mediates both low-affinity uptake and efflux of sugar across the plasma membrane. This is Bidirectional sugar transporter SWEET3a (SWEET3A) from Oryza sativa subsp. japonica (Rice).